Reading from the N-terminus, the 953-residue chain is Isoleucine--tRNA ligase (953 aa).

The 'HIGH' region motif lies at 57-67; the sequence is PYANGDIHIGH. L-isoleucyl-5'-AMP is bound at residue glutamate 582. Residues 623 to 627 carry the 'KMSKS' region motif; that stretch reads KMSKS. Lysine 626 serves as a coordination point for ATP. Residues cysteine 916, cysteine 919, cysteine 936, and cysteine 939 each contribute to the Zn(2+) site.

Belongs to the class-I aminoacyl-tRNA synthetase family. IleS type 1 subfamily. In terms of assembly, monomer. It depends on Zn(2+) as a cofactor.

It is found in the cytoplasm. It carries out the reaction tRNA(Ile) + L-isoleucine + ATP = L-isoleucyl-tRNA(Ile) + AMP + diphosphate. In terms of biological role, catalyzes the attachment of isoleucine to tRNA(Ile). As IleRS can inadvertently accommodate and process structurally similar amino acids such as valine, to avoid such errors it has two additional distinct tRNA(Ile)-dependent editing activities. One activity is designated as 'pretransfer' editing and involves the hydrolysis of activated Val-AMP. The other activity is designated 'posttransfer' editing and involves deacylation of mischarged Val-tRNA(Ile). The sequence is that of Isoleucine--tRNA ligase from Bordetella parapertussis (strain 12822 / ATCC BAA-587 / NCTC 13253).